A 426-amino-acid chain; its full sequence is Histidine--tRNA ligase (426 aa).

Belongs to the class-II aminoacyl-tRNA synthetase family. In terms of assembly, homodimer.

The protein localises to the cytoplasm. It catalyses the reaction tRNA(His) + L-histidine + ATP = L-histidyl-tRNA(His) + AMP + diphosphate + H(+). This is Histidine--tRNA ligase from Streptococcus pyogenes serotype M28 (strain MGAS6180).